A 60-amino-acid chain; its full sequence is Large ribosomal subunit protein bL32 (60 aa).

This sequence belongs to the bacterial ribosomal protein bL32 family.

This is Large ribosomal subunit protein bL32 from Azotobacter vinelandii (strain DJ / ATCC BAA-1303).